The sequence spans 345 residues: KRR1 small subunit processome component homolog (345 aa).

Residues 125–193 (DIIKIGNLVH…VRDIVLETMN (69 aa)) form the KH domain. Basic residues predominate over residues 232 to 245 (NISKRKQPKVKKQK). 2 disordered regions span residues 232–260 (NISKRKQPKVKKQKKEYTPFPPSQPESKV) and 273–345 (QEQK…ARSS). Residues 270 to 298 (FLNQEQKQAKRNQERTEKQKEAAKRQDER) are a coiled coil. Composition is skewed to basic and acidic residues over residues 276–302 (KQAKRNQERTEKQKEAAKRQDERRNKD) and 315–330 (RKKEDGSSSSKVDVKA). The segment covering 331-345 (LKAKLIKANKKARSS) has biased composition (basic residues).

This sequence belongs to the KRR1 family. Monomer. Component of the ribosomal small subunit (SSU) processome.

Its subcellular location is the nucleus. The protein resides in the nucleolus. In terms of biological role, required for 40S ribosome biogenesis. Involved in nucleolar processing of pre-18S ribosomal RNA and ribosome assembly. Binds to RNA. Required for female germline development, cell viability during eye development and for survival of dividing cells and epithelial cells during early wing disk development. The sequence is that of KRR1 small subunit processome component homolog (dbe) from Drosophila melanogaster (Fruit fly).